Here is a 354-residue protein sequence, read N- to C-terminus: Thiamine thiazole synthase 1, chloroplastic (354 aa).

The transit peptide at 1–43 (MATTAASSLLKSSFAGSRLPSATRAPSSVVVSTGGAPRTAAIS) directs the protein to the chloroplast. Residues A96, 116–117 (EQ), G124, and V190 contribute to the substrate site. At C219 the chain carries 2,3-didehydroalanine (Cys). Substrate contacts are provided by residues D221, H236, M288, and 298 to 300 (RMG).

The protein belongs to the THI4 family. As to quaternary structure, homooctamer. Fe cation is required as a cofactor. During the catalytic reaction, a sulfide is transferred from Cys-219 to a reaction intermediate, generating a dehydroalanine residue.

Its subcellular location is the plastid. The protein localises to the chloroplast. The catalysed reaction is [ADP-thiazole synthase]-L-cysteine + glycine + NAD(+) = [ADP-thiazole synthase]-dehydroalanine + ADP-5-ethyl-4-methylthiazole-2-carboxylate + nicotinamide + 3 H2O + 2 H(+). In terms of biological role, involved in biosynthesis of the thiamine precursor thiazole. Catalyzes the conversion of NAD and glycine to adenosine diphosphate 5-(2-hydroxyethyl)-4-methylthiazole-2-carboxylic acid (ADT), an adenylated thiazole intermediate. The reaction includes an iron-dependent sulfide transfer from a conserved cysteine residue of the protein to a thiazole intermediate. The enzyme can only undergo a single turnover, which suggests it is a suicide enzyme. May have additional roles in adaptation to various stress conditions and in DNA damage tolerance. The polypeptide is Thiamine thiazole synthase 1, chloroplastic (Sorghum bicolor (Sorghum)).